The chain runs to 430 residues: Glutamine synthetase leaf isozyme, chloroplastic (430 aa).

The N-terminal 49 residues, 1-49, are a transit peptide targeting the chloroplast; it reads MAQILAPSTQWQMRITKTSPCATPITSKMWSSLVMKQTKKVAHSAKFRV. Residues 77–157 enclose the GS beta-grasp domain; sequence IIAEYIWIGG…VVCDAYTPAG (81 aa). The interval 99–119 is disordered; it reads SKPVSHPSEVPKWNYDGSSTG. The region spanning 161–430 is the GS catalytic domain; sequence PTNKRHRAAE…LAAQKIALKV (270 aa).

Belongs to the glutamine synthetase family. In terms of assembly, homooctamer.

The protein localises to the plastid. The protein resides in the chloroplast. The enzyme catalyses L-glutamate + NH4(+) + ATP = L-glutamine + ADP + phosphate + H(+). Functionally, the light-modulated chloroplast enzyme, encoded by a nuclear gene and expressed primarily in leaves, is responsible for the reassimilation of the ammonia generated by photorespiration. The polypeptide is Glutamine synthetase leaf isozyme, chloroplastic (GS2) (Pisum sativum (Garden pea)).